A 462-amino-acid chain; its full sequence is 3beta-hydroxysteroid dehydrogenase/Delta(5)-Delta(4) isomerase 1 (462 aa).

NAD(+) is bound by residues 51-56 (GGAGHL), tyrosine 220, and lysine 224. Lysine 224 serves as the catalytic Proton donor. 2 consecutive transmembrane segments (helical) span residues 321-341 (VGTFSFWTPLNIALGFSSSMI) and 428-448 (VAVLVLGTILIFVAVFSFTFW).

Belongs to the 3-beta-HSD family. In terms of tissue distribution, expressed exclusively in the neuron-like XXX(L/R) cells through all four larval stages and becomes fainter in adults.

It is found in the membrane. It catalyses the reaction a 3beta-hydroxy-Delta(5)-steroid + NAD(+) = a 3-oxo-Delta(5)-steroid + NADH + H(+). It carries out the reaction cholesterol + NAD(+) = cholest-5-en-3-one + NADH + H(+). The catalysed reaction is a 3-oxo-Delta(5)-steroid = a 3-oxo-Delta(4)-steroid. The enzyme catalyses cholest-5-en-3-one = cholest-4-en-3-one. Its pathway is steroid hormone biosynthesis; dafachronic acid biosynthesis. Functionally, hydroxysteroid dehydrogenase involved in the biosynthesis of dafrachonic acids. Catalyzes the dehydrogenation of cholesterol or its derivatives and the isomerization of the double carbon bond on the sterol ring. Modifies sterols into a Delta(4)-3-keto-sterols such as cholest-4-en-3-one, precursor of Delta(4)-dafachronic acid. Contributes to the production of Delta(7)-dafachronic acid in the XXX cells. Dafachronic acids act as ligands and bind directly to the nuclear hormone receptor (NHR) daf-12 suppressing dauer formation and inducing reproductive growth. Acts in parallel to AKT-1 to promote reproductive development via DAF-16/FoxO and DAF-12. The chain is 3beta-hydroxysteroid dehydrogenase/Delta(5)-Delta(4) isomerase 1 from Caenorhabditis elegans.